A 143-amino-acid polypeptide reads, in one-letter code: Small ribosomal subunit protein uS11c (143 aa).

This sequence belongs to the universal ribosomal protein uS11 family. In terms of assembly, part of the 30S ribosomal subunit.

It is found in the plastid. Its subcellular location is the chloroplast. This chain is Small ribosomal subunit protein uS11c, found in Brachypodium distachyon (Purple false brome).